The chain runs to 335 residues: GTPase Obg (335 aa).

The 158-residue stretch at 1–158 (MFLDQITIEL…RQVELELKLI (158 aa)) folds into the Obg domain. Residues 159–334 (ADIGLVGFPN…LNSLFTNRLS (176 aa)) enclose the OBG-type G domain. Residues 165–172 (GFPNAGKS), 190–194 (FTTLQ), 215–218 (DIPG), 285–288 (NKID), and 315–317 (SGL) each bind GTP. Positions 172 and 192 each coordinate Mg(2+).

The protein belongs to the TRAFAC class OBG-HflX-like GTPase superfamily. OBG GTPase family. As to quaternary structure, monomer. Mg(2+) serves as cofactor.

The protein resides in the cytoplasm. An essential GTPase which binds GTP, GDP and possibly (p)ppGpp with moderate affinity, with high nucleotide exchange rates and a fairly low GTP hydrolysis rate. Plays a role in control of the cell cycle, stress response, ribosome biogenesis and in those bacteria that undergo differentiation, in morphogenesis control. The protein is GTPase Obg of Chlamydia caviae (strain ATCC VR-813 / DSM 19441 / 03DC25 / GPIC) (Chlamydophila caviae).